The chain runs to 250 residues: tRNA (guanine-N(1)-)-methyltransferase (250 aa).

Residues glycine 115 and 135 to 140 (LGDFVL) each bind S-adenosyl-L-methionine.

The protein belongs to the RNA methyltransferase TrmD family. As to quaternary structure, homodimer.

The protein localises to the cytoplasm. The catalysed reaction is guanosine(37) in tRNA + S-adenosyl-L-methionine = N(1)-methylguanosine(37) in tRNA + S-adenosyl-L-homocysteine + H(+). Its function is as follows. Specifically methylates guanosine-37 in various tRNAs. The sequence is that of tRNA (guanine-N(1)-)-methyltransferase from Legionella pneumophila (strain Paris).